The chain runs to 215 residues: Small ribosomal subunit protein uS7 (215 aa).

Belongs to the universal ribosomal protein uS7 family. Part of the 30S ribosomal subunit.

One of the primary rRNA binding proteins, it binds directly to 16S rRNA where it nucleates assembly of the head domain of the 30S subunit. Is located at the subunit interface close to the decoding center. The polypeptide is Small ribosomal subunit protein uS7 (Pyrococcus abyssi (strain GE5 / Orsay)).